A 616-amino-acid chain; its full sequence is Dihydroxy-acid dehydratase (616 aa).

D81 lines the Mg(2+) pocket. C122 serves as a coordination point for [2Fe-2S] cluster. Residues D123 and K124 each coordinate Mg(2+). K124 is subject to N6-carboxylysine. C195 provides a ligand contact to [2Fe-2S] cluster. Position 491 (E491) interacts with Mg(2+). S517 (proton acceptor) is an active-site residue.

This sequence belongs to the IlvD/Edd family. Homodimer. It depends on [2Fe-2S] cluster as a cofactor. The cofactor is Mg(2+).

It catalyses the reaction (2R)-2,3-dihydroxy-3-methylbutanoate = 3-methyl-2-oxobutanoate + H2O. The enzyme catalyses (2R,3R)-2,3-dihydroxy-3-methylpentanoate = (S)-3-methyl-2-oxopentanoate + H2O. It participates in amino-acid biosynthesis; L-isoleucine biosynthesis; L-isoleucine from 2-oxobutanoate: step 3/4. The protein operates within amino-acid biosynthesis; L-valine biosynthesis; L-valine from pyruvate: step 3/4. Functions in the biosynthesis of branched-chain amino acids. Catalyzes the dehydration of (2R,3R)-2,3-dihydroxy-3-methylpentanoate (2,3-dihydroxy-3-methylvalerate) into 2-oxo-3-methylpentanoate (2-oxo-3-methylvalerate) and of (2R)-2,3-dihydroxy-3-methylbutanoate (2,3-dihydroxyisovalerate) into 2-oxo-3-methylbutanoate (2-oxoisovalerate), the penultimate precursor to L-isoleucine and L-valine, respectively. The polypeptide is Dihydroxy-acid dehydratase (Escherichia coli O157:H7 (strain EC4115 / EHEC)).